The chain runs to 216 residues: Uracil phosphoribosyltransferase (216 aa).

Residues Arg85, Arg110, and 135–143 (DPMVATGYS) each bind 5-phospho-alpha-D-ribose 1-diphosphate. Residues Ile200 and 205–207 (GDA) each bind uracil. Asp206 lines the 5-phospho-alpha-D-ribose 1-diphosphate pocket.

It belongs to the UPRTase family. Requires Mg(2+) as cofactor.

It catalyses the reaction UMP + diphosphate = 5-phospho-alpha-D-ribose 1-diphosphate + uracil. It participates in pyrimidine metabolism; UMP biosynthesis via salvage pathway; UMP from uracil: step 1/1. Its activity is regulated as follows. Allosterically activated by GTP. Functionally, catalyzes the conversion of uracil and 5-phospho-alpha-D-ribose 1-diphosphate (PRPP) to UMP and diphosphate. The chain is Uracil phosphoribosyltransferase from Burkholderia ambifaria (strain MC40-6).